A 633-amino-acid chain; its full sequence is MINVYFSDNSCKQFLPGIKGSDIITHLFPELLNKAIAIKINDKSLDLSTEITEDCKFEVITLDSDEGLDIIRHDTAHIMAQAIKEMFPEVKTVVGPTIKDGFYYDFSTDHIFSSNELEKIEEKMREIIKKNESFIREVWTREEAIRFFSNKGEDYKVKIIAKIPIHENITVYKQGSFIDLCRGPHAPSTKISKAFKLTKVSGSYWEGNTNNAQLQRIYGTAWRTEEELKLYLNNLIEVEKRDHRKIGKELELFHIQNEALGQIFWHEKGLIIYRIIENYIRKKLENNGYIEVKTPYLLSKTLWEQSGHWDKFREHMFLSEIDNKVVAIKPMNCPCHVQIFNSKIRSYKDLPLRMAEFGTCHRYEASGALHGLMRVRSFTQDDAHIFCTEDQIIEEALKFCNLLMEVYEVFGFKDILVKFSDRPEKRAGSDKIWDKAEEALKASVKAANLNYVLNPGDGAFYGPKLEFTLKDAIGREWQCGTLQMDFVLPERLGAYYTGSDGKKHHPIMLHRAILGTIERFIGILIEHHSGKLPIWLAPVQLSILTITEDAIDYAISLKHKAMKQNIRAEVDITNEKINYKIRSHISKKIPVLWIIGKKEIETESVSIRYLESKDQHIMSSDKALKTLLSCASI.

Residues 1–61 (MINVYFSDNS…TEDCKFEVIT (61 aa)) form the TGS domain. Residues 242-533 (DHRKIGKELE…LIEHHSGKLP (292 aa)) are catalytic. Residues Cys-333, His-384, and His-510 each contribute to the Zn(2+) site.

The protein belongs to the class-II aminoacyl-tRNA synthetase family. In terms of assembly, homodimer. Requires Zn(2+) as cofactor.

The protein resides in the cytoplasm. It catalyses the reaction tRNA(Thr) + L-threonine + ATP = L-threonyl-tRNA(Thr) + AMP + diphosphate + H(+). Its function is as follows. Catalyzes the attachment of threonine to tRNA(Thr) in a two-step reaction: L-threonine is first activated by ATP to form Thr-AMP and then transferred to the acceptor end of tRNA(Thr). Also edits incorrectly charged L-seryl-tRNA(Thr). In Ehrlichia ruminantium (strain Gardel), this protein is Threonine--tRNA ligase.